Here is a 199-residue protein sequence, read N- to C-terminus: Pyridoxine/pyridoxamine 5'-phosphate oxidase (199 aa).

Residues 44 to 49, 59 to 60, Lys-66, and Gln-91 each bind FMN; these read RTVLLK and YT. Residue Lys-49 coordinates substrate. Substrate-binding residues include Tyr-109, Arg-113, and Ser-117. FMN is bound by residues 126–127 and Trp-171; that span reads QS. Substrate is bound at residue 177–179; sequence RLH. Arg-181 provides a ligand contact to FMN.

This sequence belongs to the pyridoxamine 5'-phosphate oxidase family. As to quaternary structure, homodimer. The cofactor is FMN.

The enzyme catalyses pyridoxamine 5'-phosphate + O2 + H2O = pyridoxal 5'-phosphate + H2O2 + NH4(+). The catalysed reaction is pyridoxine 5'-phosphate + O2 = pyridoxal 5'-phosphate + H2O2. Its pathway is cofactor metabolism; pyridoxal 5'-phosphate salvage; pyridoxal 5'-phosphate from pyridoxamine 5'-phosphate: step 1/1. It functions in the pathway cofactor metabolism; pyridoxal 5'-phosphate salvage; pyridoxal 5'-phosphate from pyridoxine 5'-phosphate: step 1/1. In terms of biological role, catalyzes the oxidation of either pyridoxine 5'-phosphate (PNP) or pyridoxamine 5'-phosphate (PMP) into pyridoxal 5'-phosphate (PLP). The chain is Pyridoxine/pyridoxamine 5'-phosphate oxidase from Xanthomonas axonopodis pv. citri (strain 306).